A 94-amino-acid polypeptide reads, in one-letter code: Small ribosomal subunit protein bS18 (94 aa).

The protein belongs to the bacterial ribosomal protein bS18 family. As to quaternary structure, part of the 30S ribosomal subunit. Forms a tight heterodimer with protein bS6.

Binds as a heterodimer with protein bS6 to the central domain of the 16S rRNA, where it helps stabilize the platform of the 30S subunit. This is Small ribosomal subunit protein bS18 from Polaromonas naphthalenivorans (strain CJ2).